The chain runs to 422 residues: Imidazolonepropionase (422 aa).

Fe(3+)-binding residues include His-82 and His-84. Residues His-82 and His-84 each contribute to the Zn(2+) site. 4-imidazolone-5-propanoate-binding residues include Arg-91, Tyr-154, and His-187. Tyr-154 serves as a coordination point for N-formimidoyl-L-glutamate. Fe(3+) is bound at residue His-252. His-252 lines the Zn(2+) pocket. Position 255 (Glu-255) interacts with 4-imidazolone-5-propanoate. Residue Asp-327 coordinates Fe(3+). A Zn(2+)-binding site is contributed by Asp-327. 2 residues coordinate N-formimidoyl-L-glutamate: Asn-329 and Gly-331. Ser-332 lines the 4-imidazolone-5-propanoate pocket.

This sequence belongs to the metallo-dependent hydrolases superfamily. HutI family. Zn(2+) is required as a cofactor. It depends on Fe(3+) as a cofactor.

Its subcellular location is the cytoplasm. It catalyses the reaction 4-imidazolone-5-propanoate + H2O = N-formimidoyl-L-glutamate. The protein operates within amino-acid degradation; L-histidine degradation into L-glutamate; N-formimidoyl-L-glutamate from L-histidine: step 3/3. Its function is as follows. Catalyzes the hydrolytic cleavage of the carbon-nitrogen bond in imidazolone-5-propanoate to yield N-formimidoyl-L-glutamate. It is the third step in the universal histidine degradation pathway. The sequence is that of Imidazolonepropionase from Alkaliphilus metalliredigens (strain QYMF).